The chain runs to 456 residues: MTASLWQQCLNRLQDELPSAEFSMWIRPLQAELSDNTLTLYAPNRFVLDWVRDKYLIRVNGIINELCGVDGPTLRFDIGNRPHPVAIARAPARGAAPVNNLQKSWESKADAKPEPNHKSNTNVNYTFENFVEGKSNQLARAAARQVADNPGGAYNPLFLYGGTGLGKTHLLHAVGNAIKERKKDAKVIYMHSERFVQDMVKALQNNAIEEFKRYYRSVDALLIDDIQFFANKERSQEEFFHTFNALLEGNQQIILTSDRYPKEINGVEDRLKSRFGWGLTVAIEPPELETRVAILMRKADENQIHLPDEVAFFIAKRLRSNVRELEGALNRVIANANFTGRAINIDFVREALRDLLALQEKLVTIDNIQKTVAEYYKIKLADLLSKRRSRSVARPRQLAMALAKELTNHSLPEIGDAFGGREHTTVLHACRKIEQLKEESHDIKEDYSNLIRTLSS.

Positions 1 to 83 (MTASLWQQCL…LRFDIGNRPH (83 aa)) are domain I, interacts with DnaA modulators. Residues 83-119 (HPVAIARAPARGAAPVNNLQKSWESKADAKPEPNHKS) are domain II. The segment at 120 to 336 (NTNVNYTFEN…GALNRVIANA (217 aa)) is domain III, AAA+ region. Residues G164, G166, K167, and T168 each coordinate ATP. Positions 337-456 (NFTGRAINID…YSNLIRTLSS (120 aa)) are domain IV, binds dsDNA.

Belongs to the DnaA family. In terms of assembly, oligomerizes as a right-handed, spiral filament on DNA at oriC.

Its subcellular location is the cytoplasm. Functionally, plays an essential role in the initiation and regulation of chromosomal replication. ATP-DnaA binds to the origin of replication (oriC) to initiate formation of the DNA replication initiation complex once per cell cycle. Binds the DnaA box (a 9 base pair repeat at the origin) and separates the double-stranded (ds)DNA. Forms a right-handed helical filament on oriC DNA; dsDNA binds to the exterior of the filament while single-stranded (ss)DNA is stabiized in the filament's interior. The ATP-DnaA-oriC complex binds and stabilizes one strand of the AT-rich DNA unwinding element (DUE), permitting loading of DNA polymerase. After initiation quickly degrades to an ADP-DnaA complex that is not apt for DNA replication. Binds acidic phospholipids. This chain is Chromosomal replication initiator protein DnaA, found in Aeromonas salmonicida (strain A449).